The sequence spans 364 residues: sn-glycerol-3-phosphate import ATP-binding protein UgpC (364 aa).

Residues 4 to 235 (VVLRNVRKTY…PATTFVASFI (232 aa)) enclose the ABC transporter domain. 37–44 (GPSGCGKS) is an ATP binding site.

This sequence belongs to the ABC transporter superfamily. sn-glycerol-3-phosphate importer (TC 3.A.1.1.3) family. As to quaternary structure, the complex is composed of two ATP-binding proteins (UgpC), two transmembrane proteins (UgpA and UgpE) and a solute-binding protein (UgpB).

The protein resides in the cell inner membrane. It carries out the reaction sn-glycerol 3-phosphate(out) + ATP + H2O = sn-glycerol 3-phosphate(in) + ADP + phosphate + H(+). Part of the ABC transporter complex UgpBAEC involved in sn-glycerol-3-phosphate (G3P) import. Responsible for energy coupling to the transport system. This Rhodopseudomonas palustris (strain HaA2) protein is sn-glycerol-3-phosphate import ATP-binding protein UgpC.